Here is a 347-residue protein sequence, read N- to C-terminus: Holliday junction branch migration complex subunit RuvB (347 aa).

Positions 1-186 (MKDENSISFL…FGITARFELY (186 aa)) are large ATPase domain (RuvB-L). ATP is bound by residues leucine 25, arginine 26, glycine 67, lysine 70, threonine 71, threonine 72, 133–135 (EDY), arginine 176, tyrosine 186, and arginine 223. Threonine 71 contributes to the Mg(2+) binding site. Positions 187-257 (SEIELVEIIK…IVSIGLEMLR (71 aa)) are small ATPAse domain (RuvB-S). The interval 260-347 (GEGLDEQDRN…GLNENQRVSF (88 aa)) is head domain (RuvB-H). Residues arginine 315 and arginine 320 each coordinate DNA.

Belongs to the RuvB family. As to quaternary structure, homohexamer. Forms an RuvA(8)-RuvB(12)-Holliday junction (HJ) complex. HJ DNA is sandwiched between 2 RuvA tetramers; dsDNA enters through RuvA and exits via RuvB. An RuvB hexamer assembles on each DNA strand where it exits the tetramer. Each RuvB hexamer is contacted by two RuvA subunits (via domain III) on 2 adjacent RuvB subunits; this complex drives branch migration. In the full resolvosome a probable DNA-RuvA(4)-RuvB(12)-RuvC(2) complex forms which resolves the HJ.

The protein localises to the cytoplasm. The catalysed reaction is ATP + H2O = ADP + phosphate + H(+). In terms of biological role, the RuvA-RuvB-RuvC complex processes Holliday junction (HJ) DNA during genetic recombination and DNA repair, while the RuvA-RuvB complex plays an important role in the rescue of blocked DNA replication forks via replication fork reversal (RFR). RuvA specifically binds to HJ cruciform DNA, conferring on it an open structure. The RuvB hexamer acts as an ATP-dependent pump, pulling dsDNA into and through the RuvAB complex. RuvB forms 2 homohexamers on either side of HJ DNA bound by 1 or 2 RuvA tetramers; 4 subunits per hexamer contact DNA at a time. Coordinated motions by a converter formed by DNA-disengaged RuvB subunits stimulates ATP hydrolysis and nucleotide exchange. Immobilization of the converter enables RuvB to convert the ATP-contained energy into a lever motion, pulling 2 nucleotides of DNA out of the RuvA tetramer per ATP hydrolyzed, thus driving DNA branch migration. The RuvB motors rotate together with the DNA substrate, which together with the progressing nucleotide cycle form the mechanistic basis for DNA recombination by continuous HJ branch migration. Branch migration allows RuvC to scan DNA until it finds its consensus sequence, where it cleaves and resolves cruciform DNA. This chain is Holliday junction branch migration complex subunit RuvB, found in Borreliella burgdorferi (strain ATCC 35210 / DSM 4680 / CIP 102532 / B31) (Borrelia burgdorferi).